The following is a 263-amino-acid chain: 4-hydroxy-tetrahydrodipicolinate reductase (263 aa).

NAD(+) contacts are provided by residues 7-12, 96-98, and 122-125; these read GFKGRM, GTT, and APNF. The Proton donor/acceptor role is filled by His152. His153 lines the (S)-2,3,4,5-tetrahydrodipicolinate pocket. The active-site Proton donor is the Lys156. 162–163 provides a ligand contact to (S)-2,3,4,5-tetrahydrodipicolinate; it reads GT.

This sequence belongs to the DapB family.

It is found in the cytoplasm. The enzyme catalyses (S)-2,3,4,5-tetrahydrodipicolinate + NAD(+) + H2O = (2S,4S)-4-hydroxy-2,3,4,5-tetrahydrodipicolinate + NADH + H(+). The catalysed reaction is (S)-2,3,4,5-tetrahydrodipicolinate + NADP(+) + H2O = (2S,4S)-4-hydroxy-2,3,4,5-tetrahydrodipicolinate + NADPH + H(+). The protein operates within amino-acid biosynthesis; L-lysine biosynthesis via DAP pathway; (S)-tetrahydrodipicolinate from L-aspartate: step 4/4. Its function is as follows. Catalyzes the conversion of 4-hydroxy-tetrahydrodipicolinate (HTPA) to tetrahydrodipicolinate. The sequence is that of 4-hydroxy-tetrahydrodipicolinate reductase from Listeria monocytogenes serotype 4b (strain CLIP80459).